The sequence spans 83 residues: Hainantoxin-III 2 (83 aa).

The signal sequence occupies residues 1 to 21 (MKASMYLALAGLVLLFVVGYA). The propeptide occupies 22-48 (SESEEKEFPRELLSKIFAVDDFKGEER). 3 disulfides stabilise this stretch: cysteine 50–cysteine 65, cysteine 57–cysteine 70, and cysteine 64–cysteine 77. Residue leucine 81 is modified to Leucine amide.

The protein belongs to the neurotoxin 10 (Hwtx-1) family. 15 (Hntx-3) subfamily. Monomer. In terms of tissue distribution, expressed by the venom gland.

The protein resides in the secreted. Functionally, selective antagonist of neuronal tetrodotoxin (TTX)-sensitive voltage-gated sodium channels (IC(50)=1270 nM on Nav1.1/SCN1A, 270 nM on Nav1.2/SCN2A, 491 nM on Nav1.3/SCN3A and 232 nM on Nav1.7/SCN9A). This toxin suppress Nav1.7 current amplitude without significantly altering the activation, inactivation, and repriming kinetics. Short extreme depolarizations partially activate the toxin-bound channel, indicating voltage-dependent inhibition of this toxin. This toxin increases the deactivation of the Nav1.7 current after extreme depolarizations. The toxin-Nav1.7 complex is gradually dissociated upon prolonged strong depolarizations in a voltage-dependent manner, and the unbound toxin rebinds to Nav1.7 after a long repolarization. Moreover, analysis of chimeric channels showed that the DIIS3-S4 linker is critical for toxin binding to Nav1.7. These data are consistent with this toxin interacting with Nav1.7 site 4 and trapping the domain II voltage sensor in the closed state. In Cyriopagopus hainanus (Chinese bird spider), this protein is Hainantoxin-III 2.